The primary structure comprises 156 residues: Zinc metalloproteinase-disintegrin jararin (156 aa).

The region spanning 1 to 67 (FVANRMAHEL…NYYGCLLNEP (67 aa)) is the Peptidase M12B domain. Histidine 8 contributes to the Zn(2+) binding site. Residue glutamate 9 is part of the active site. Histidine 12 contributes to the Zn(2+) binding site. 9 cysteine pairs are disulfide-bonded: cysteine 23–cysteine 47, cysteine 25–cysteine 30, cysteine 78–cysteine 97, cysteine 89–cysteine 107, cysteine 91–cysteine 102, cysteine 101–cysteine 124, cysteine 115–cysteine 121, cysteine 120–cysteine 145, and cysteine 133–cysteine 152. Residues 75-156 (PPFCGNYYPE…GQSGDCPRNS (82 aa)) enclose the Disintegrin domain. Basic and acidic residues predominate over residues 136–145 (GRGDNPDDRC). The interval 136-156 (GRGDNPDDRCTGQSGDCPRNS) is disordered. A Cell attachment site motif is present at residues 137-139 (RGD). Residues 146-156 (TGQSGDCPRNS) show a composition bias toward polar residues.

The protein belongs to the venom metalloproteinase (M12B) family. P-II subfamily. P-IIb sub-subfamily. In terms of assembly, monomer. The cofactor is Zn(2+). In terms of tissue distribution, expressed by the venom gland.

The protein localises to the secreted. Snake venom zinc metalloproteinase that inhibits ADP-induced platelet aggregation (probably by binding integrin alpha-IIb/beta-3 (ITGA2B/ITGB3)) and degrades fibrinogen. The sequence is that of Zinc metalloproteinase-disintegrin jararin from Bothrops jararaca (Jararaca).